We begin with the raw amino-acid sequence, 78 residues long: Large ribosomal subunit protein bL28 (78 aa).

Residues 1–23 (MSRVCQVSGKRVQTGNNVSHANN) form a disordered region. Residues 11–22 (RVQTGNNVSHAN) show a composition bias toward polar residues.

This sequence belongs to the bacterial ribosomal protein bL28 family.

The protein is Large ribosomal subunit protein bL28 of Xanthomonas campestris pv. campestris (strain 8004).